The chain runs to 345 residues: Phosphoribosylformylglycinamidine cyclo-ligase (345 aa).

This sequence belongs to the AIR synthase family.

The protein localises to the cytoplasm. It carries out the reaction 2-formamido-N(1)-(5-O-phospho-beta-D-ribosyl)acetamidine + ATP = 5-amino-1-(5-phospho-beta-D-ribosyl)imidazole + ADP + phosphate + H(+). The protein operates within purine metabolism; IMP biosynthesis via de novo pathway; 5-amino-1-(5-phospho-D-ribosyl)imidazole from N(2)-formyl-N(1)-(5-phospho-D-ribosyl)glycinamide: step 2/2. The chain is Phosphoribosylformylglycinamidine cyclo-ligase from Limosilactobacillus reuteri (strain DSM 20016) (Lactobacillus reuteri).